Consider the following 681-residue polypeptide: Potassium-transporting ATPase ATP-binding subunit (681 aa).

Helical transmembrane passes span 30 to 50 (LLVY…FFGI), 59 to 79 (LAIA…EAIA), 216 to 236 (ILLV…LPFT), and 255 to 275 (IALL…SIGI). Residue D306 is the 4-aspartylphosphate intermediate of the active site. ATP is bound by residues D343, E347, 376-383 (FTATTRMS), and K394. Positions 517 and 521 each coordinate Mg(2+). Helical transmembrane passes span 587–607 (FAII…LNLM), 615–635 (AILS…PLSL), and 661–681 (LIAP…LGIV).

Belongs to the cation transport ATPase (P-type) (TC 3.A.3) family. Type IA subfamily. As to quaternary structure, the system is composed of three essential subunits: KdpA, KdpB and KdpC.

It localises to the cell membrane. The enzyme catalyses K(+)(out) + ATP + H2O = K(+)(in) + ADP + phosphate + H(+). Functionally, part of the high-affinity ATP-driven potassium transport (or Kdp) system, which catalyzes the hydrolysis of ATP coupled with the electrogenic transport of potassium into the cytoplasm. This subunit is responsible for energy coupling to the transport system and for the release of the potassium ions to the cytoplasm. The protein is Potassium-transporting ATPase ATP-binding subunit of Listeria monocytogenes serovar 1/2a (strain ATCC BAA-679 / EGD-e).